The chain runs to 495 residues: Maturase K (495 aa).

The protein belongs to the intron maturase 2 family. MatK subfamily.

It is found in the plastid. The protein localises to the chloroplast. Functionally, usually encoded in the trnK tRNA gene intron. Probably assists in splicing its own and other chloroplast group II introns. This chain is Maturase K, found in Torreya californica (California nutmeg).